The following is a 147-amino-acid chain: Cyanate hydratase (147 aa).

Catalysis depends on residues Arg-88, Glu-91, and Ser-114.

Belongs to the cyanase family.

It carries out the reaction cyanate + hydrogencarbonate + 3 H(+) = NH4(+) + 2 CO2. Catalyzes the reaction of cyanate with bicarbonate to produce ammonia and carbon dioxide. This chain is Cyanate hydratase, found in Ralstonia pickettii (strain 12J).